A 453-amino-acid chain; its full sequence is Glutamate--tRNA ligase 2 (453 aa).

Positions 10–20 match the 'HIGH' region motif; the sequence is PSPTGFLHIGG. The 'KMSKS' region motif lies at 232 to 236; sequence KLSKR. Residue Lys-235 coordinates ATP.

Belongs to the class-I aminoacyl-tRNA synthetase family. Glutamate--tRNA ligase type 1 subfamily. In terms of assembly, monomer.

It localises to the cytoplasm. It catalyses the reaction tRNA(Glu) + L-glutamate + ATP = L-glutamyl-tRNA(Glu) + AMP + diphosphate. Functionally, catalyzes the attachment of glutamate to tRNA(Glu) in a two-step reaction: glutamate is first activated by ATP to form Glu-AMP and then transferred to the acceptor end of tRNA(Glu). This is Glutamate--tRNA ligase 2 from Wolbachia sp. subsp. Brugia malayi (strain TRS).